A 621-amino-acid chain; its full sequence is Interferon-induced GTP-binding protein Mx1 (621 aa).

One can recognise a Dynamin-type G domain in the interval 31–304 (DLALPAIAVI…LVHHIEKSLP (274 aa)). The segment at 41–48 (GDQSSGKS) is G1 motif. GTP is bound at residue 41-48 (GDQSSGKS). The interval 66-68 (VTR) is G2 motif. Residues 142–145 (DLPG) form a G3 motif region. Residues 142–146 (DLPGI) and 211–214 (TKPD) each bind GTP. Residues 211–214 (TKPD) form a G4 motif region. The G5 motif stretch occupies residues 243-246 (KCRG). A GED domain is found at 535 to 621 (LQEMMLHLKS…MKARSYLVEF (87 aa)).

It belongs to the TRAFAC class dynamin-like GTPase superfamily. Dynamin/Fzo/YdjA family.

Its subcellular location is the cytoplasm. In terms of biological role, does not inhibit strain RB-1 of the fish pathogen, infectious hematopoietic necrosis virus (IHNV). This chain is Interferon-induced GTP-binding protein Mx1 (mx1), found in Oncorhynchus mykiss (Rainbow trout).